The sequence spans 406 residues: Tyrosine--tRNA ligase (406 aa).

Y34 is a binding site for L-tyrosine. The 'HIGH' region signature appears at 39–48 (PTADSLHVGH). Residues Y167 and Q171 each contribute to the L-tyrosine site. Residues 227–231 (KMGKT) carry the 'KMSKS' region motif. K230 is a binding site for ATP. The region spanning 339–404 (RKIVDVLFEA…GKKEYHRLLV (66 aa)) is the S4 RNA-binding domain.

The protein belongs to the class-I aminoacyl-tRNA synthetase family. TyrS type 1 subfamily. Homodimer.

It localises to the cytoplasm. The enzyme catalyses tRNA(Tyr) + L-tyrosine + ATP = L-tyrosyl-tRNA(Tyr) + AMP + diphosphate + H(+). Catalyzes the attachment of tyrosine to tRNA(Tyr) in a two-step reaction: tyrosine is first activated by ATP to form Tyr-AMP and then transferred to the acceptor end of tRNA(Tyr). The protein is Tyrosine--tRNA ligase of Caldanaerobacter subterraneus subsp. tengcongensis (strain DSM 15242 / JCM 11007 / NBRC 100824 / MB4) (Thermoanaerobacter tengcongensis).